Consider the following 610-residue polypeptide: UvrABC system protein C (610 aa).

A GIY-YIG domain is found at 16–94; sequence SQPGVYRMYD…IKLYQPRYNV (79 aa). The region spanning 204-239 is the UVR domain; it reads DQVLTQLIARMEKASQDLAFEEAARIRDQIQAVRRV.

Belongs to the UvrC family. Interacts with UvrB in an incision complex.

The protein localises to the cytoplasm. The UvrABC repair system catalyzes the recognition and processing of DNA lesions. UvrC both incises the 5' and 3' sides of the lesion. The N-terminal half is responsible for the 3' incision and the C-terminal half is responsible for the 5' incision. The polypeptide is UvrABC system protein C (Salmonella heidelberg (strain SL476)).